The sequence spans 351 residues: Histidinol-phosphate aminotransferase (351 aa).

An N6-(pyridoxal phosphate)lysine modification is found at Lys-213.

The protein belongs to the class-II pyridoxal-phosphate-dependent aminotransferase family. Histidinol-phosphate aminotransferase subfamily. In terms of assembly, homodimer. Pyridoxal 5'-phosphate is required as a cofactor.

The catalysed reaction is L-histidinol phosphate + 2-oxoglutarate = 3-(imidazol-4-yl)-2-oxopropyl phosphate + L-glutamate. The enzyme catalyses L-histidine + 2-oxoglutarate = 3-(imidazol-5-yl)pyruvate + L-glutamate. It functions in the pathway amino-acid biosynthesis; L-histidine biosynthesis; L-histidine from 5-phospho-alpha-D-ribose 1-diphosphate: step 7/9. The polypeptide is Histidinol-phosphate aminotransferase (Caldanaerobacter subterraneus subsp. tengcongensis (strain DSM 15242 / JCM 11007 / NBRC 100824 / MB4) (Thermoanaerobacter tengcongensis)).